Here is a 449-residue protein sequence, read N- to C-terminus: Methylenetetrahydrofolate--tRNA-(uracil-5-)-methyltransferase TrmFO (449 aa).

10–15 (GGGLAG) serves as a coordination point for FAD.

This sequence belongs to the MnmG family. TrmFO subfamily. FAD is required as a cofactor.

It is found in the cytoplasm. The enzyme catalyses uridine(54) in tRNA + (6R)-5,10-methylene-5,6,7,8-tetrahydrofolate + NADH + H(+) = 5-methyluridine(54) in tRNA + (6S)-5,6,7,8-tetrahydrofolate + NAD(+). It catalyses the reaction uridine(54) in tRNA + (6R)-5,10-methylene-5,6,7,8-tetrahydrofolate + NADPH + H(+) = 5-methyluridine(54) in tRNA + (6S)-5,6,7,8-tetrahydrofolate + NADP(+). Catalyzes the folate-dependent formation of 5-methyl-uridine at position 54 (M-5-U54) in all tRNAs. The chain is Methylenetetrahydrofolate--tRNA-(uracil-5-)-methyltransferase TrmFO from Sphingopyxis alaskensis (strain DSM 13593 / LMG 18877 / RB2256) (Sphingomonas alaskensis).